Here is a 52-residue protein sequence, read N- to C-terminus: Conotoxin Cal6.25 (52 aa).

A signal peptide spans 1–22 (MKLTHVLIVAVLVLTVCHLTMA). 3 disulfides stabilise this stretch: Cys-24/Cys-41, Cys-31/Cys-45, and Cys-40/Cys-50.

Expressed by the venom duct.

Its subcellular location is the secreted. Functionally, probable neurotoxin. The chain is Conotoxin Cal6.25 from Californiconus californicus (California cone).